The primary structure comprises 206 residues: UPF0301 protein Msil_1255 (206 aa).

It belongs to the UPF0301 (AlgH) family.

This Methylocella silvestris (strain DSM 15510 / CIP 108128 / LMG 27833 / NCIMB 13906 / BL2) protein is UPF0301 protein Msil_1255.